Reading from the N-terminus, the 444-residue chain is MPSHFDTLQLHAGQEKTADAHNPRAVPIYATTSYVFNDSKHGAQLFGLETPGYIYSRIMNPTLDVLEKRLAALEGGIAALATSSGQAAQTLAVTGLAHTGDNIVSTSFLYGGTYNQFKVAFKRLGIEARFVDGDKPEDFEKLFDEKTKALYLESIGNPKYNVPDFEKIVAVAHKHGIPVVVDNTFGAGGFFCQPIKYGADIVTHSATKWIGGHGVTVGGVIIDSGKFPWKDYPEKFPQFSQPSEGYHGLIFNDAFGPAAFIGHVRTELLRDLGPVLSPFAGFLLLQGLETLSLRGERHGSNALKLAQYLESSPYVSWVSYPGLPSHSHHENAKKYLENGFGGVLSFGVKDLPNASEESDPFKASGAQVVDNLKLASNLANVGDSKTLVIAPYFTTHQQLTDEEKLASGVTKDLIRVSVGTEFIDDIIADFEASFATVFNGQKPE.

K208 bears the N6-(pyridoxal phosphate)lysine mark.

The protein belongs to the trans-sulfuration enzymes family. As to quaternary structure, homotetramer. It depends on pyridoxal 5'-phosphate as a cofactor.

It localises to the cytoplasm. It catalyses the reaction O-acetyl-L-homoserine + methanethiol = L-methionine + acetate + H(+). The catalysed reaction is O-acetyl-L-homoserine + hydrogen sulfide = L-homocysteine + acetate. It carries out the reaction O-acetyl-L-serine + hydrogen sulfide = L-cysteine + acetate. It participates in amino-acid biosynthesis; L-methionine biosynthesis via de novo pathway; L-homocysteine from O-acetyl-L-homoserine. Its pathway is amino-acid biosynthesis; L-cysteine biosynthesis; L-cysteine from L-serine: step 2/2. In terms of biological role, catalyzes the conversion of O-acetyl-L-homoserine (OAH) into homocysteine in the methionine biosynthesis pathway. Also catalyzes the conversion of O-acetylserine (OAS) into cysteine, the last step in the cysteine biosynthesis pathway. This is Homocysteine/cysteine synthase (MET17) from Kluyveromyces lactis (strain ATCC 8585 / CBS 2359 / DSM 70799 / NBRC 1267 / NRRL Y-1140 / WM37) (Yeast).